A 324-amino-acid chain; its full sequence is MNSLVALVLLGQIIGSTLSFQLGPNMDCNTKGTKDWADIGVRYINEHKLDGYKNALNIIKIFRLLPSDGRSVIVHFKLNLLETKCHVLDPTPVENCAVRQQHNHAVEMDCNVRIIHDIATFEDEVFVKCKSTPDSVENVRRNCPKCPILLPPNDPHVVDSVEYVLNKHNEKLSGHVYEVLEISRGQHKYEPEAFYVEFAIVEVNCTAQEARDGHHQCHPYTAGEDHIAFCRATVFRSHASLEKPKDENFESDCVILDVKEGHAHSHLIQQHIEKYSTSPGHNSTDEYVVECPVAFVEKEVPTDMSDHDTPPVKGCPGRVLHFQL.

A signal peptide spans 1-19 (MNSLVALVLLGQIIGSTLS). 2 Cystatin fetuin-A-type domains span residues 21-130 (QLGP…VKCK) and 141-254 (RNCP…SDCV). Disulfide bonds link C28–C315, C85–C96, C110–C129, C143–C146, C205–C217, and C230–C253. N-linked (GlcNAc...) asparagine glycosylation occurs at N204. N-linked (GlcNAc...) asparagine glycosylation occurs at N282.

Belongs to the fetuin family. In terms of assembly, homodimer. As to expression, expressed by the liver.

It localises to the secreted. Functionally, potent inhibitor of hemorrhagic activity but also proteolytic activities. Inhibition occurs by formation of a non-covalent complex between this protein and the proteinases at their metalloproteinase domains. In Gloydius brevicauda (Korean slamosa snake), this protein is Antihemorrhagic factor cHLP-A.